A 421-amino-acid polypeptide reads, in one-letter code: Serine--tRNA ligase (421 aa).

229 to 231 (TSE) contacts L-serine. ATP contacts are provided by residues 260–262 (RKE) and valine 276. Glutamate 283 contacts L-serine. 347–350 (EIVS) is a binding site for ATP. Residue threonine 383 participates in L-serine binding.

The protein belongs to the class-II aminoacyl-tRNA synthetase family. Type-1 seryl-tRNA synthetase subfamily. Homodimer. The tRNA molecule binds across the dimer.

The protein localises to the cytoplasm. It catalyses the reaction tRNA(Ser) + L-serine + ATP = L-seryl-tRNA(Ser) + AMP + diphosphate + H(+). It carries out the reaction tRNA(Sec) + L-serine + ATP = L-seryl-tRNA(Sec) + AMP + diphosphate + H(+). Its pathway is aminoacyl-tRNA biosynthesis; selenocysteinyl-tRNA(Sec) biosynthesis; L-seryl-tRNA(Sec) from L-serine and tRNA(Sec): step 1/1. Functionally, catalyzes the attachment of serine to tRNA(Ser). Is also able to aminoacylate tRNA(Sec) with serine, to form the misacylated tRNA L-seryl-tRNA(Sec), which will be further converted into selenocysteinyl-tRNA(Sec). This chain is Serine--tRNA ligase, found in Nitrosopumilus maritimus (strain SCM1).